A 390-amino-acid chain; its full sequence is Nicotinate phosphoribosyltransferase (390 aa).

At histidine 211 the chain carries Phosphohistidine; by autocatalysis.

The protein belongs to the NAPRTase family. Post-translationally, transiently phosphorylated on a His residue during the reaction cycle. Phosphorylation strongly increases the affinity for substrates and increases the rate of nicotinate D-ribonucleotide production. Dephosphorylation regenerates the low-affinity form of the enzyme, leading to product release.

It carries out the reaction nicotinate + 5-phospho-alpha-D-ribose 1-diphosphate + ATP + H2O = nicotinate beta-D-ribonucleotide + ADP + phosphate + diphosphate. It functions in the pathway cofactor biosynthesis; NAD(+) biosynthesis; nicotinate D-ribonucleotide from nicotinate: step 1/1. Catalyzes the synthesis of beta-nicotinate D-ribonucleotide from nicotinate and 5-phospho-D-ribose 1-phosphate at the expense of ATP. This chain is Nicotinate phosphoribosyltransferase, found in Chromohalobacter salexigens (strain ATCC BAA-138 / DSM 3043 / CIP 106854 / NCIMB 13768 / 1H11).